The following is a 629-amino-acid chain: Serine/threonine-protein kinase ICK (629 aa).

Positions Tyr-4 to Phe-284 constitute a Protein kinase domain. ATP-binding positions include Leu-10–Val-18 and Lys-33. Residue Asp-125 is the Proton acceptor of the active site. Thr-157 is modified (phosphothreonine; by CDK7). Position 159 is a phosphotyrosine (Tyr-159). At Ser-161 the chain carries Phosphoserine. Disordered regions lie at residues Ile-292–Asn-376, Ser-455–Lys-483, and Ser-581–Arg-629. The segment covering Asp-296–Asp-306 has biased composition (basic and acidic residues). The segment covering Gly-309–Gln-321 has biased composition (pro residues). Low complexity-rich tracts occupy residues Ala-322–Ser-344 and Ser-457–Ser-470.

Belongs to the protein kinase superfamily. CMGC Ser/Thr protein kinase family. CDC2/CDKX subfamily. The cofactor is Mg(2+). Autophosphorylated on serine and threonine residues. Phosphorylation at Thr-157 by CDK7/Cak1p increases kinase activity. As to expression, highly expressed in colon and lung, lower levels present in heart, esophagus, stomach, small intestine and ovary. Localizes to the crypt region of large and small intestine.

The protein localises to the cytoplasm. It localises to the cytosol. Its subcellular location is the cell projection. It is found in the cilium. The protein resides in the nucleus. The protein localises to the cytoskeleton. It localises to the cilium basal body. The catalysed reaction is L-seryl-[protein] + ATP = O-phospho-L-seryl-[protein] + ADP + H(+). It carries out the reaction L-threonyl-[protein] + ATP = O-phospho-L-threonyl-[protein] + ADP + H(+). Has an essential role in ciliogenesis, particularly in neuronal and retinal progenitor cells. Phosphorylates KIF3A. Involved in the control of ciliary length. Regulates the ciliary localization of SHH pathway components as well as the localization of IFT components at ciliary tips. May play a role in cardiac development. Regulates intraflagellar transport (IFT) speed and negatively regulates cilium length in a cAMP and mTORC1 signaling -dependent manner and this regulation requires its kinase activity. The polypeptide is Serine/threonine-protein kinase ICK (Cilk1) (Mus musculus (Mouse)).